Consider the following 437-residue polypeptide: ATP-dependent protease ATPase subunit HslU (437 aa).

ATP-binding positions include V18, 60–65 (GCGKTE), D250, E315, and R387.

This sequence belongs to the ClpX chaperone family. HslU subfamily. A double ring-shaped homohexamer of HslV is capped on each side by a ring-shaped HslU homohexamer. The assembly of the HslU/HslV complex is dependent on binding of ATP.

Its subcellular location is the cytoplasm. In terms of biological role, ATPase subunit of a proteasome-like degradation complex; this subunit has chaperone activity. The binding of ATP and its subsequent hydrolysis by HslU are essential for unfolding of protein substrates subsequently hydrolyzed by HslV. HslU recognizes the N-terminal part of its protein substrates and unfolds these before they are guided to HslV for hydrolysis. The chain is ATP-dependent protease ATPase subunit HslU from Methylorubrum extorquens (strain PA1) (Methylobacterium extorquens).